A 76-amino-acid polypeptide reads, in one-letter code: Protein RALF-like 26 (76 aa).

A signal peptide spans 1 to 22 (MKAWMIILLVICVAVVVEQSEA). A disulfide bridge links cysteine 37 with cysteine 46. Asparagine 61 carries N-linked (GlcNAc...) asparagine glycosylation. Cysteine 66 and cysteine 72 are joined by a disulfide.

The protein belongs to the plant rapid alkalinization factor (RALF) family.

It is found in the secreted. Its function is as follows. Cell signaling peptide that may regulate plant stress, growth, and development. Mediates a rapid alkalinization of extracellular space by mediating a transient increase in the cytoplasmic Ca(2+) concentration leading to a calcium-dependent signaling events through a cell surface receptor and a concomitant activation of some intracellular mitogen-activated protein kinases. In Arabidopsis thaliana (Mouse-ear cress), this protein is Protein RALF-like 26 (RALFL26).